The primary structure comprises 98 residues: UPF0251 protein Sputcn32_0687 (98 aa).

It belongs to the UPF0251 family.

The protein is UPF0251 protein Sputcn32_0687 of Shewanella putrefaciens (strain CN-32 / ATCC BAA-453).